The following is an 87-amino-acid chain: RNA-binding protein Hfq (87 aa).

One can recognise a Sm domain in the interval 9 to 68 (DPFLNALRRERIPVSIYLVNGIKLQGQIESFDQFVILLKNTVSQMVYKHAISTVVPARAV).

This sequence belongs to the Hfq family. Homohexamer.

In terms of biological role, RNA chaperone that binds small regulatory RNA (sRNAs) and mRNAs to facilitate mRNA translational regulation in response to envelope stress, environmental stress and changes in metabolite concentrations. Also binds with high specificity to tRNAs. This Aeromonas salmonicida (strain A449) protein is RNA-binding protein Hfq.